The sequence spans 338 residues: Fructose-bisphosphate aldolase (338 aa).

The substrate site is built by Arg-50 and Lys-138. Glu-179 (proton acceptor) is an active-site residue. The Schiff-base intermediate with dihydroxyacetone-P role is filled by Lys-221.

The protein belongs to the class I fructose-bisphosphate aldolase family.

It catalyses the reaction beta-D-fructose 1,6-bisphosphate = D-glyceraldehyde 3-phosphate + dihydroxyacetone phosphate. Its pathway is carbohydrate degradation; glycolysis; D-glyceraldehyde 3-phosphate and glycerone phosphate from D-glucose: step 4/4. This is Fructose-bisphosphate aldolase from Encephalitozoon cuniculi (strain GB-M1) (Microsporidian parasite).